We begin with the raw amino-acid sequence, 39 residues long: Photosystem II reaction center protein Psb30 (39 aa).

A helical membrane pass occupies residues 12-32 (IFQLTFVGLIVIAGPIVIAVL).

The protein belongs to the Psb30/Ycf12 family. PSII is composed of 1 copy each of membrane proteins PsbA, PsbB, PsbC, PsbD, PsbE, PsbF, PsbH, PsbI, PsbJ, PsbK, PsbL, PsbM, PsbT, PsbX, PsbY, PsbZ, Psb30/Ycf12, peripheral proteins PsbO, CyanoQ (PsbQ), PsbU, PsbV and a large number of cofactors. It forms dimeric complexes.

It localises to the cellular thylakoid membrane. Functionally, a core subunit of photosystem II (PSII), probably helps stabilize the reaction center. The sequence is that of Photosystem II reaction center protein Psb30 from Crocosphaera subtropica (strain ATCC 51142 / BH68) (Cyanothece sp. (strain ATCC 51142)).